A 301-amino-acid polypeptide reads, in one-letter code: Probable cyclic nucleotide phosphodiesterase RER_40650 (301 aa).

Residues aspartate 20, histidine 22, aspartate 61, asparagine 95, histidine 167, histidine 205, and histidine 207 each coordinate Fe cation. AMP contacts are provided by residues histidine 22, aspartate 61, and 95–96; that span reads NH. Histidine 207 contributes to the AMP binding site.

It belongs to the cyclic nucleotide phosphodiesterase class-III family. Fe(2+) serves as cofactor.

This chain is Probable cyclic nucleotide phosphodiesterase RER_40650, found in Rhodococcus erythropolis (strain PR4 / NBRC 100887).